Consider the following 151-residue polypeptide: Cell division control protein 2 homolog 2 (151 aa).

Residues 1 to 151 (ALKEIRMDNE…IMQTLQIESL (151 aa)) form the Protein kinase domain. Residue lysine 3 participates in ATP binding. Aspartate 113 serves as the catalytic Proton acceptor.

This sequence belongs to the protein kinase superfamily. CMGC Ser/Thr protein kinase family. CDC2/CDKX subfamily.

The enzyme catalyses L-seryl-[protein] + ATP = O-phospho-L-seryl-[protein] + ADP + H(+). The catalysed reaction is L-threonyl-[protein] + ATP = O-phospho-L-threonyl-[protein] + ADP + H(+). It carries out the reaction [DNA-directed RNA polymerase] + ATP = phospho-[DNA-directed RNA polymerase] + ADP + H(+). This chain is Cell division control protein 2 homolog 2, found in Pisum sativum (Garden pea).